Here is a 485-residue protein sequence, read N- to C-terminus: D-alanine--D-alanyl carrier protein ligase (485 aa).

144–145 contributes to the ATP binding site; that stretch reads TS. Aspartate 189 provides a ligand contact to D-alanine. 284-289 contributes to the ATP binding site; that stretch reads NTYGPT. Residue valine 293 participates in D-alanine binding. ATP contacts are provided by aspartate 365 and lysine 473. Lysine 473 contacts D-alanine.

The protein belongs to the ATP-dependent AMP-binding enzyme family. DltA subfamily.

Its subcellular location is the cytoplasm. The catalysed reaction is holo-[D-alanyl-carrier protein] + D-alanine + ATP = D-alanyl-[D-alanyl-carrier protein] + AMP + diphosphate. Its pathway is cell wall biogenesis; lipoteichoic acid biosynthesis. In terms of biological role, catalyzes the first step in the D-alanylation of lipoteichoic acid (LTA), the activation of D-alanine and its transfer onto the D-alanyl carrier protein (Dcp) DltC. In an ATP-dependent two-step reaction, forms a high energy D-alanyl-AMP intermediate, followed by transfer of the D-alanyl residue as a thiol ester to the phosphopantheinyl prosthetic group of the Dcp. D-alanylation of LTA plays an important role in modulating the properties of the cell wall in Gram-positive bacteria, influencing the net charge of the cell wall. This Staphylococcus aureus (strain Mu3 / ATCC 700698) protein is D-alanine--D-alanyl carrier protein ligase.